The sequence spans 132 residues: ATP synthase epsilon chain (132 aa).

It belongs to the ATPase epsilon chain family. In terms of assembly, F-type ATPases have 2 components, CF(1) - the catalytic core - and CF(0) - the membrane proton channel. CF(1) has five subunits: alpha(3), beta(3), gamma(1), delta(1), epsilon(1). CF(0) has three main subunits: a, b and c.

It localises to the cell membrane. Functionally, produces ATP from ADP in the presence of a proton gradient across the membrane. In Desulforamulus reducens (strain ATCC BAA-1160 / DSM 100696 / MI-1) (Desulfotomaculum reducens), this protein is ATP synthase epsilon chain.